We begin with the raw amino-acid sequence, 219 residues long: Putative NAD(P)H nitroreductase SSP0379 (219 aa).

This sequence belongs to the nitroreductase family. FMN serves as cofactor.

This is Putative NAD(P)H nitroreductase SSP0379 from Staphylococcus saprophyticus subsp. saprophyticus (strain ATCC 15305 / DSM 20229 / NCIMB 8711 / NCTC 7292 / S-41).